Reading from the N-terminus, the 162-residue chain is ATP synthase subunit b', chloroplastic (162 aa).

A helical membrane pass occupies residues 26-46 (ATLPLQALQFILLTVLLTFIF).

The protein belongs to the ATPase B chain family. In terms of assembly, F-type ATPases have 2 components, F(1) - the catalytic core - and F(0) - the membrane proton channel. F(1) has five subunits: alpha(3), beta(3), gamma(1), delta(1), epsilon(1). F(0) has four main subunits: a(1), b(1), b'(1) and c(10-14). The alpha and beta chains form an alternating ring which encloses part of the gamma chain. F(1) is attached to F(0) by a central stalk formed by the gamma and epsilon chains, while a peripheral stalk is formed by the delta, b and b' chains.

The protein resides in the plastid. Its subcellular location is the chloroplast thylakoid membrane. Functionally, f(1)F(0) ATP synthase produces ATP from ADP in the presence of a proton or sodium gradient. F-type ATPases consist of two structural domains, F(1) containing the extramembraneous catalytic core and F(0) containing the membrane proton channel, linked together by a central stalk and a peripheral stalk. During catalysis, ATP synthesis in the catalytic domain of F(1) is coupled via a rotary mechanism of the central stalk subunits to proton translocation. Its function is as follows. Component of the F(0) channel, it forms part of the peripheral stalk, linking F(1) to F(0). The b'-subunit is a diverged and duplicated form of b found in plants and photosynthetic bacteria. This chain is ATP synthase subunit b', chloroplastic, found in Emiliania huxleyi (Coccolithophore).